The following is a 149-amino-acid chain: Transcriptional repressor NrdR (149 aa).

Residues 3–34 (CPFCDTEETKVIDSRLVSDGYQVRRRRECGHC) fold into a zinc finger. An ATP-cone domain is found at 49–139 (PKIIKTDGTR…VYLSFDDIDQ (91 aa)).

It belongs to the NrdR family. It depends on Zn(2+) as a cofactor.

In terms of biological role, negatively regulates transcription of bacterial ribonucleotide reductase nrd genes and operons by binding to NrdR-boxes. In Haemophilus influenzae (strain 86-028NP), this protein is Transcriptional repressor NrdR.